The chain runs to 535 residues: EH domain-containing protein 3 (535 aa).

Met-1 bears the N-acetylmethionine mark. Residues 55–286 enclose the Dynamin-type G domain; the sequence is FDNKPMVLLV…DLFRDIQSLP (232 aa). Residues 65–72 are G1 motif; sequence GQYSTGKT. 65–72 is an ATP binding site; sequence GQYSTGKT. The G2 motif stretch occupies residues 91–92; that stretch reads EP. Residues 153–156 are G3 motif; the sequence is DTPG. Positions 198–227 form a coiled coil; that stretch reads DEFSEVIKALKNHEDKMRVVLNKADQIETQ. A G4 motif region spans residues 219–222; it reads NKAD. Lys-220 lines the ATP pocket. A region of interest (G5 motif) is located at residue Ile-243. Trp-258 contacts ATP. Lys-315 participates in a covalent cross-link: Glycyl lysine isopeptide (Lys-Gly) (interchain with G-Cter in SUMO). Residues Ser-349 and Ser-456 each carry the phosphoserine modification. Residues 444–532 form the EH domain; it reads DKPMYDEIFY…AHLLPPSKRK (89 aa). In terms of domain architecture, EF-hand spans 476–511; that stretch reads LPNSVLGKIWKLADIDKDGMLDDDEFALANHLIKVK. Ca(2+)-binding residues include Asp-489, Asp-491, Asp-493, Met-495, and Glu-500. Lys-511 participates in a covalent cross-link: Glycyl lysine isopeptide (Lys-Gly) (interchain with G-Cter in SUMO).

The protein belongs to the TRAFAC class dynamin-like GTPase superfamily. Dynamin/Fzo/YdjA family. EHD subfamily. As to quaternary structure, homooligomer, and heterooligomer with EHD1, EHD2 and EHD4, ATP-binding is required for heterooligomerization. Interacts with PACSIN1. Interacts with PACSIN2. Interacts (via EH domain) with MICALL1. Interacts (via EH domain) with RAB11FIP2. Interacts with ANK2. As to expression, highly expressed in heart and brain and moderately expressed in kidney, liver, and placenta.

It localises to the recycling endosome membrane. The protein resides in the cell membrane. Its subcellular location is the cell projection. The protein localises to the cilium membrane. In terms of biological role, ATP- and membrane-binding protein that controls membrane reorganization/tubulation upon ATP hydrolysis. In vitro causes tubulation of endocytic membranes. Binding to phosphatidic acid induces its membrane tubulation activity. Plays a role in endocytic transport. Involved in early endosome to recycling endosome compartment (ERC), retrograde early endosome to Golgi, and endosome to plasma membrane (rapid recycling) protein transport. Involved in the regulation of Golgi maintenance and morphology. Involved in the recycling of internalized D1 dopamine receptor. Plays a role in cardiac protein trafficking probably implicating ANK2. Involved in the ventricular membrane targeting of SLC8A1 and CACNA1C and probably the atrial membrane localization of CACNA1GG and CACNA1H implicated in the regulation of atrial myocyte excitability and cardiac conduction. In conjunction with EHD4 may be involved in endocytic trafficking of KDR/VEGFR2 implicated in control of glomerular function. Involved in the rapid recycling of integrin beta-3 implicated in cell adhesion maintenance. Involved in the unidirectional retrograde dendritic transport of endocytosed BACE1 and in efficient sorting of BACE1 to axons implicating a function in neuronal APP processing. Plays a role in the formation of the ciliary vesicle, an early step in cilium biogenesis; possibly sharing redundant functions with EHD1. The polypeptide is EH domain-containing protein 3 (Homo sapiens (Human)).